The following is a 455-amino-acid chain: Adenylyltransferase and sulfurtransferase MOCS3 (455 aa).

ATP contacts are provided by residues G90, D111, 118–122, K135, and 179–180; these read SNLAR and DN. The interaction with NFS1 stretch occupies residues 156-236; that stretch reads AQALTPATAL…RPPPAETVTS (81 aa). Residues C220 and C223 each contribute to the Zn(2+) site. C237 functions as the Glycyl thioester intermediate; for adenylyltransferase activity in the catalytic mechanism. Zn(2+) contacts are provided by C295 and C298. Residues C314 and C322 are joined by a disulfide bond. Residues 345-453 form the Rhodanese domain; that stretch reads SRSPHLLLDV…WAAKIDGTFP (109 aa). The active-site Cysteine persulfide intermediate; for sulfurtransferase activity is C410. Cysteine persulfide is present on C410.

This sequence in the N-terminal section; belongs to the HesA/MoeB/ThiF family. UBA4 subfamily. In terms of assembly, interacts with NFS1. Requires Zn(2+) as cofactor.

It is found in the cytoplasm. The protein localises to the cytosol. The catalysed reaction is [molybdopterin-synthase sulfur-carrier protein]-C-terminal Gly-Gly + ATP + H(+) = [molybdopterin-synthase sulfur-carrier protein]-C-terminal Gly-Gly-AMP + diphosphate. It carries out the reaction [molybdopterin-synthase sulfur-carrier protein]-C-terminal Gly-Gly-AMP + S-sulfanyl-L-cysteinyl-[cysteine desulfurase] + AH2 = [molybdopterin-synthase sulfur-carrier protein]-C-terminal-Gly-aminoethanethioate + L-cysteinyl-[cysteine desulfurase] + A + AMP + 2 H(+). Its pathway is tRNA modification; 5-methoxycarbonylmethyl-2-thiouridine-tRNA biosynthesis. The protein operates within cofactor biosynthesis; molybdopterin biosynthesis. Functionally, plays a central role in 2-thiolation of mcm(5)S(2)U at tRNA wobble positions of cytosolic tRNA(Lys), tRNA(Glu) and tRNA(Gln). Also essential during biosynthesis of the molybdenum cofactor. Acts by mediating the C-terminal thiocarboxylation of sulfur carriers URM1 and MOCS2A. Its N-terminus first activates URM1 and MOCS2A as acyl-adenylates (-COAMP), then the persulfide sulfur on the catalytic cysteine is transferred to URM1 and MOCS2A to form thiocarboxylation (-COSH) of their C-terminus. The reaction probably involves hydrogen sulfide that is generated from the persulfide intermediate and that acts as a nucleophile towards URM1 and MOCS2A. Subsequently, a transient disulfide bond is formed. Does not use thiosulfate as sulfur donor; NFS1 acting as a sulfur donor for thiocarboxylation reactions. In Bos taurus (Bovine), this protein is Adenylyltransferase and sulfurtransferase MOCS3.